The primary structure comprises 331 residues: Tetraacyldisaccharide 4'-kinase (331 aa).

ATP is bound at residue 51 to 58 (TAGGAGKT).

The protein belongs to the LpxK family.

The catalysed reaction is a lipid A disaccharide + ATP = a lipid IVA + ADP + H(+). It functions in the pathway glycolipid biosynthesis; lipid IV(A) biosynthesis; lipid IV(A) from (3R)-3-hydroxytetradecanoyl-[acyl-carrier-protein] and UDP-N-acetyl-alpha-D-glucosamine: step 6/6. Transfers the gamma-phosphate of ATP to the 4'-position of a tetraacyldisaccharide 1-phosphate intermediate (termed DS-1-P) to form tetraacyldisaccharide 1,4'-bis-phosphate (lipid IVA). The polypeptide is Tetraacyldisaccharide 4'-kinase (Rhodospirillum rubrum (strain ATCC 11170 / ATH 1.1.1 / DSM 467 / LMG 4362 / NCIMB 8255 / S1)).